We begin with the raw amino-acid sequence, 689 residues long: Glycine--tRNA ligase beta subunit (689 aa).

It belongs to the class-II aminoacyl-tRNA synthetase family. As to quaternary structure, tetramer of two alpha and two beta subunits.

It localises to the cytoplasm. It catalyses the reaction tRNA(Gly) + glycine + ATP = glycyl-tRNA(Gly) + AMP + diphosphate. This is Glycine--tRNA ligase beta subunit from Shewanella pealeana (strain ATCC 700345 / ANG-SQ1).